A 457-amino-acid polypeptide reads, in one-letter code: Ribulose bisphosphate carboxylase-like protein (457 aa).

3 residues coordinate Mg(2+): K199, D201, and E202. K199 is subject to N6-carboxylysine. Residues 426–457 (AIAAFGKPAHGQAASPQPSEQASEPDAAGGDS) form a disordered region.

The protein belongs to the RuBisCO large chain family. Type IV subfamily. It depends on Mg(2+) as a cofactor.

Functionally, may be involved in sulfur metabolism and oxidative stress response. Does not show RuBisCO activity. The chain is Ribulose bisphosphate carboxylase-like protein from Allochromatium vinosum (strain ATCC 17899 / DSM 180 / NBRC 103801 / NCIMB 10441 / D) (Chromatium vinosum).